Consider the following 286-residue polypeptide: 3-hydroxyanthranilate 3,4-dioxygenase (286 aa).

The tract at residues 1-160 is domain A (catalytic); the sequence is MERCVRVKSW…SEQYRTGKPN (160 aa). An O2-binding site is contributed by Arg-43. Residues His-47, Glu-53, and His-91 each coordinate Fe cation. A substrate-binding site is contributed by Glu-53. Residues Arg-95 and Glu-105 each contribute to the substrate site. A linker region spans residues 161 to 177; the sequence is PDQLLKEPPFPLSTRSV. A domain B region spans residues 178–286; that stretch reads MEPMSLKAWL…QDPACKKPLG (109 aa).

This sequence belongs to the 3-HAO family. As to quaternary structure, monomer. It depends on Fe(2+) as a cofactor.

The protein resides in the cytoplasm. Its subcellular location is the cytosol. It carries out the reaction 3-hydroxyanthranilate + O2 = (2Z,4Z)-2-amino-3-carboxymuconate 6-semialdehyde. It functions in the pathway cofactor biosynthesis; NAD(+) biosynthesis; quinolinate from L-kynurenine: step 3/3. Its function is as follows. Catalyzes the oxidative ring opening of 3-hydroxyanthranilate to 2-amino-3-carboxymuconate semialdehyde, which spontaneously cyclizes to quinolinate. The sequence is that of 3-hydroxyanthranilate 3,4-dioxygenase (Haao) from Rattus norvegicus (Rat).